Consider the following 346-residue polypeptide: tRNA N6-adenosine threonylcarbamoyltransferase (346 aa).

Residues His111 and His115 each coordinate Fe cation. Residues Leu134–Gly138, Asp167, Gly180, and Asn279 contribute to the substrate site. Asp307 provides a ligand contact to Fe cation.

This sequence belongs to the KAE1 / TsaD family. Fe(2+) serves as cofactor.

The protein resides in the cytoplasm. The catalysed reaction is L-threonylcarbamoyladenylate + adenosine(37) in tRNA = N(6)-L-threonylcarbamoyladenosine(37) in tRNA + AMP + H(+). Functionally, required for the formation of a threonylcarbamoyl group on adenosine at position 37 (t(6)A37) in tRNAs that read codons beginning with adenine. Is involved in the transfer of the threonylcarbamoyl moiety of threonylcarbamoyl-AMP (TC-AMP) to the N6 group of A37, together with TsaE and TsaB. TsaD likely plays a direct catalytic role in this reaction. This is tRNA N6-adenosine threonylcarbamoyltransferase from Burkholderia cenocepacia (strain HI2424).